A 223-amino-acid polypeptide reads, in one-letter code: Glycolipid transfer protein 2 (223 aa).

The a ganglioside GM3 (d18:1(4E)) site is built by Asp-69, Asn-73, Trp-116, and His-155.

This sequence belongs to the GLTP family.

Its function is as follows. Transfers glycolipids in vitro. This chain is Glycolipid transfer protein 2, found in Arabidopsis thaliana (Mouse-ear cress).